The primary structure comprises 459 residues: Glycosyl hydrolase family 109 protein (459 aa).

Residues methionine 1–alanine 31 constitute a signal peptide (tat-type signal). NAD(+) contacts are provided by residues glutamate 64–arginine 65, aspartate 86, tryptophan 135–histidine 138, glutamate 155–valine 156, and asparagine 184. Substrate contacts are provided by residues tyrosine 213, arginine 232, tyrosine 244–histidine 247, and tyrosine 326. Residue tyrosine 244 participates in NAD(+) binding.

This sequence belongs to the Gfo/Idh/MocA family. Glycosyl hydrolase 109 subfamily. Requires NAD(+) as cofactor. In terms of processing, predicted to be exported by the Tat system. The position of the signal peptide cleavage has not been experimentally proven.

In terms of biological role, glycosidase. The chain is Glycosyl hydrolase family 109 protein from Shewanella putrefaciens (strain CN-32 / ATCC BAA-453).